The following is a 189-amino-acid chain: Inner membrane-spanning protein YciB (189 aa).

The next 5 membrane-spanning stretches (helical) occupy residues Phe-4–Ile-24, Ile-53–Phe-73, Trp-76–Tyr-96, Met-121–Leu-141, and Phe-149–Ile-169.

This sequence belongs to the YciB family.

Its subcellular location is the cell inner membrane. Plays a role in cell envelope biogenesis, maintenance of cell envelope integrity and membrane homeostasis. In Psychromonas ingrahamii (strain DSM 17664 / CCUG 51855 / 37), this protein is Inner membrane-spanning protein YciB.